An 803-amino-acid polypeptide reads, in one-letter code: Spondin-1 (803 aa).

The N-terminal stretch at methionine 1–glycine 23 is a signal peptide. One can recognise a Reelin domain in the interval phenylalanine 24–lysine 190. Intrachain disulfides connect cysteine 39–cysteine 124, cysteine 152–cysteine 178, cysteine 195–cysteine 331, cysteine 196–cysteine 335, cysteine 198–cysteine 409, cysteine 437–cysteine 474, cysteine 448–cysteine 483, cysteine 453–cysteine 488, cysteine 496–cysteine 532, cysteine 507–cysteine 511, cysteine 542–cysteine 548, cysteine 553–cysteine 589, cysteine 564–cysteine 568, and cysteine 599–cysteine 604. The region spanning threonine 191–proline 383 is the Spondin domain. Asparagine 210 carries N-linked (GlcNAc...) asparagine glycosylation. Residues aspartate 320, aspartate 349, and aspartate 353 each contribute to the Ca(2+) site. The interval aspartate 353 to glycine 389 is disordered. Residues serine 354–threonine 365 show a composition bias toward polar residues. 5 TSP type-1 domains span residues threonine 436 to serine 489, threonine 495 to glutamate 549, serine 552 to histidine 605, proline 608 to proline 662, and serine 664 to glutamine 717. N-linked (GlcNAc...) asparagine glycosylation occurs at asparagine 677. The disordered stretch occupies residues asparagine 722–glutamate 741. One can recognise a TSP type-1 6 domain in the interval valine 750–proline 802.

As to expression, expressed at high levels in the floor plate.

The protein resides in the secreted. It is found in the extracellular space. Its subcellular location is the extracellular matrix. Functionally, promotes the attachment of spinal cord and sensory neuron cells and the outgrowth of neurites in vitro. May contribute to the growth and guidance of axons in both the spinal cord and the PNS. This chain is Spondin-1 (spon1), found in Xenopus laevis (African clawed frog).